The primary structure comprises 184 residues: Ribosome maturation factor RimM (184 aa).

The 74-residue stretch at 111-184 (DDEFYWVDLI…HIVVDWGLDY (74 aa)) folds into the PRC barrel domain.

The protein belongs to the RimM family. In terms of assembly, binds ribosomal protein uS19.

The protein resides in the cytoplasm. An accessory protein needed during the final step in the assembly of 30S ribosomal subunit, possibly for assembly of the head region. Essential for efficient processing of 16S rRNA. May be needed both before and after RbfA during the maturation of 16S rRNA. It has affinity for free ribosomal 30S subunits but not for 70S ribosomes. This is Ribosome maturation factor RimM from Ralstonia nicotianae (strain ATCC BAA-1114 / GMI1000) (Ralstonia solanacearum).